The following is a 344-amino-acid chain: Anthranilate phosphoribosyltransferase (344 aa).

5-phospho-alpha-D-ribose 1-diphosphate-binding positions include glycine 85, 88 to 89, threonine 93, 95 to 98, 113 to 121, and serine 125; these read GD, NIST, and KHGGRSVSS. Glycine 85 lines the anthranilate pocket. Residue serine 97 participates in Mg(2+) binding. Arginine 171 contacts anthranilate. Mg(2+) is bound by residues aspartate 230 and glutamate 231.

Belongs to the anthranilate phosphoribosyltransferase family. Homodimer. Requires Mg(2+) as cofactor.

It catalyses the reaction N-(5-phospho-beta-D-ribosyl)anthranilate + diphosphate = 5-phospho-alpha-D-ribose 1-diphosphate + anthranilate. Its pathway is amino-acid biosynthesis; L-tryptophan biosynthesis; L-tryptophan from chorismate: step 2/5. Functionally, catalyzes the transfer of the phosphoribosyl group of 5-phosphorylribose-1-pyrophosphate (PRPP) to anthranilate to yield N-(5'-phosphoribosyl)-anthranilate (PRA). The chain is Anthranilate phosphoribosyltransferase from Acidovorax ebreus (strain TPSY) (Diaphorobacter sp. (strain TPSY)).